A 655-amino-acid polypeptide reads, in one-letter code: Archaeal Lon protease (655 aa).

Over 1 to 123 (MEENIESVEE…KAEREKRDRS (123 aa)) the chain is Cytoplasmic. 57 to 64 (GEPGTGKS) is a binding site for ATP. The chain crosses the membrane as a helical span at residues 124–144 (RSIMFVIFSVVLLGIIAAIVL). Position 145 (R145) is a topological domain, extracellular. A helical transmembrane segment spans residues 146-166 (SITLIFFAIMAAAFLYMAMAF). Residues 167–655 (NPVIRNEKAM…ASTRAGQNVA (489 aa)) lie on the Cytoplasmic side of the membrane. A Lon proteolytic domain is found at 433-618 (GSVVGMVNGL…EDVLKVALVN (186 aa)). Residues S525 and K568 contribute to the active site.

The protein belongs to the peptidase S16 family. Archaeal LonB subfamily. Homohexamer. Organized in a ring with a central cavity.

Its subcellular location is the cell membrane. ATP-dependent serine protease that mediates the selective degradation of mutant and abnormal proteins as well as certain short-lived regulatory proteins. Degrades polypeptides processively. The sequence is that of Archaeal Lon protease from Thermoplasma volcanium (strain ATCC 51530 / DSM 4299 / JCM 9571 / NBRC 15438 / GSS1).